The following is a 623-amino-acid chain: Transketolase (623 aa).

Methionine 1 bears the N-acetylmethionine mark. Residues lysine 6 and lysine 11 each carry the N6-acetyllysine modification. Residue histidine 37 participates in substrate binding. Thiamine diphosphate contacts are provided by serine 40 and histidine 77. Serine 104 is modified (phosphoserine). A thiamine diphosphate-binding site is contributed by 123–125 (GSL). At lysine 144 the chain carries N6-acetyllysine. Aspartate 155 contacts Mg(2+). Thiamine diphosphate is bound by residues glycine 156 and asparagine 185. Asparagine 185 and leucine 187 together coordinate Mg(2+). An N6-acetyllysine mark is found at lysine 204, lysine 232, and lysine 241. Thiamine diphosphate contacts are provided by lysine 244 and histidine 258. Histidine 258 lines the substrate pocket. Lysine 260 carries the post-translational modification N6-acetyllysine. Tyrosine 275 carries the post-translational modification Phosphotyrosine. A Phosphothreonine modification is found at threonine 287. Serine 295 is subject to Phosphoserine. Positions 318 and 345 each coordinate substrate. Position 345 is a phosphoserine (serine 345). Lysine 352 is covalently cross-linked (Glycyl lysine isopeptide (Lys-Gly) (interchain with G-Cter in SUMO2)). The Proton donor role is filled by glutamate 366. Phenylalanine 392 is a binding site for thiamine diphosphate. Positions 416 and 424 each coordinate substrate. Thiamine diphosphate is bound at residue glutamine 428. Substrate is bound at residue arginine 474. An N6-acetyllysine mark is found at lysine 538 and lysine 603.

Belongs to the transketolase family. In terms of assembly, homodimer. Requires Mg(2+) as cofactor. Ca(2+) is required as a cofactor. The cofactor is Mn(2+). Co(2+) serves as cofactor. It depends on thiamine diphosphate as a cofactor.

The enzyme catalyses D-sedoheptulose 7-phosphate + D-glyceraldehyde 3-phosphate = aldehydo-D-ribose 5-phosphate + D-xylulose 5-phosphate. Catalyzes the transfer of a two-carbon ketol group from a ketose donor to an aldose acceptor, via a covalent intermediate with the cofactor thiamine pyrophosphate. The polypeptide is Transketolase (Tkt) (Mus musculus (Mouse)).